The chain runs to 91 residues: Molybdopterin synthase sulfur carrier subunit (91 aa).

Gly91 carries the post-translational modification 1-thioglycine; alternate. The residue at position 91 (Gly91) is a Glycyl adenylate; alternate.

The protein belongs to the MoaD family. MOCS2A subfamily. As to quaternary structure, heterotetramer; composed of 2 small (MOCS2A) and 2 large (MOCS2B) subunits. Post-translationally, C-terminal thiocarboxylation occurs in 2 steps, it is first acyl-adenylated (-COAMP) via the hesA/moeB/thiF part of uba4, then thiocarboxylated (-COSH) via the rhodanese domain of uba4.

Its subcellular location is the cytoplasm. The protein operates within cofactor biosynthesis; molybdopterin biosynthesis. Functionally, acts as a sulfur carrier required for molybdopterin biosynthesis. Component of the molybdopterin synthase complex that catalyzes the conversion of precursor Z into molybdopterin by mediating the incorporation of 2 sulfur atoms into precursor Z to generate a dithiolene group. In the complex, serves as sulfur donor by being thiocarboxylated (-COSH) at its C-terminus by uba4. After interaction with MOCS2B, the sulfur is then transferred to precursor Z to form molybdopterin. In Emericella nidulans (strain FGSC A4 / ATCC 38163 / CBS 112.46 / NRRL 194 / M139) (Aspergillus nidulans), this protein is Molybdopterin synthase sulfur carrier subunit.